We begin with the raw amino-acid sequence, 158 residues long: Crossover junction endodeoxyribonuclease RuvC (158 aa).

Residues aspartate 7, glutamate 66, and aspartate 139 contribute to the active site. Mg(2+)-binding residues include aspartate 7, glutamate 66, and aspartate 139.

Belongs to the RuvC family. Homodimer which binds Holliday junction (HJ) DNA. The HJ becomes 2-fold symmetrical on binding to RuvC with unstacked arms; it has a different conformation from HJ DNA in complex with RuvA. In the full resolvosome a probable DNA-RuvA(4)-RuvB(12)-RuvC(2) complex forms which resolves the HJ. It depends on Mg(2+) as a cofactor.

It localises to the cytoplasm. It carries out the reaction Endonucleolytic cleavage at a junction such as a reciprocal single-stranded crossover between two homologous DNA duplexes (Holliday junction).. Its function is as follows. The RuvA-RuvB-RuvC complex processes Holliday junction (HJ) DNA during genetic recombination and DNA repair. Endonuclease that resolves HJ intermediates. Cleaves cruciform DNA by making single-stranded nicks across the HJ at symmetrical positions within the homologous arms, yielding a 5'-phosphate and a 3'-hydroxyl group; requires a central core of homology in the junction. The consensus cleavage sequence is 5'-(A/T)TT(C/G)-3'. Cleavage occurs on the 3'-side of the TT dinucleotide at the point of strand exchange. HJ branch migration catalyzed by RuvA-RuvB allows RuvC to scan DNA until it finds its consensus sequence, where it cleaves and resolves the cruciform DNA. The protein is Crossover junction endodeoxyribonuclease RuvC of Carboxydothermus hydrogenoformans (strain ATCC BAA-161 / DSM 6008 / Z-2901).